A 591-amino-acid chain; its full sequence is Complement component C8 beta chain (591 aa).

A signal peptide spans 1–32 (MKNSRTWAWRAPVELFLLCAALGCLSLPGSRG). A propeptide spanning residues 33–54 (ERPHSFGSNAVNKSFAKSRQMR) is cleaved from the precursor. In terms of domain architecture, TSP type-1 1 spans 64–117 (DCELSSWSSWTTCDPCQKKRYRYAYLLQPSQFHGEPCNFSDKEVEDCVTNRPCG). 7 disulfide bridges follow: Cys65/Cys100, Cys76/Cys110, Cys79/Cys116, Cys122/Cys133, Cys127/Cys146, Cys140/Cys155, and Cys162/Cys200. C-linked (Man) tryptophan glycans are attached at residues Trp70 and Trp73. Residue Asn101 is glycosylated (N-linked (GlcNAc...) asparagine). The region spanning 120–157 (VRCEGFVCAQTGRCVNRRLLCNGDNDCGDQSDEANCRR) is the LDL-receptor class A domain. The Ca(2+) site is built by Leu138, Asn141, Asp143, Asp145, Asp151, and Glu152. The 347-residue stretch at 158–504 (IYKKCQHEMD…EFQKEVSSCH (347 aa)) folds into the MACPF domain. N-linked (GlcNAc...) asparagine glycosylation occurs at Asn243. The next 4 beta stranded transmembrane spans lie at 252–259 (SGFSFGFK), 262–269 (GIFELGIS), 379–386 (AKNDFKIG), and 392–399 (VYVSLGVS). Cys378 and Cys403 are disulfide-bonded. At Thr418 the chain carries Phosphothreonine. Intrachain disulfides connect Cys503-Cys550, Cys505-Cys521, Cys508-Cys523, and Cys525-Cys534. One can recognise an EGF-like domain in the interval 505 to 535 (CAPCQGNGVPVLKGSRCDCICPVGSQGLACE). Residues 545-591 (DGKWNCWSNWSSCSGRRKTRQRQCNNPPPQNGGSPCSGPASETLDCS) enclose the TSP type-1 2 domain. Residues Trp551 and Trp554 are each glycosylated (C-linked (Man) tryptophan). Residues Cys557 and Cys590 are joined by a disulfide bond. The tract at residues 568–591 (CNNPPPQNGGSPCSGPASETLDCS) is disordered.

It belongs to the complement C6/C7/C8/C9 family. As to quaternary structure, heterotrimer of 3 chains: alpha (C8A), beta (C8B) and gamma (C8G); the alpha and gamma chains are disulfide bonded. Component of the membrane attack complex (MAC), composed of complement C5b, C6, C7, C8A, C8B, C8G and multiple copies of the pore-forming subunit C9. Post-translationally, N-glycosylated; contains one or two bound glycans. Not O-glycosylated.

The protein localises to the secreted. It is found in the target cell membrane. Membrane attack complex (MAC) assembly is inhibited by CD59, thereby protecting self-cells from damage during complement activation. CD59 acts by binding to the beta-haipins of C8 (C8A and C8B), forming an intermolecular beta-sheet that prevents incorporation of the multiple copies of C9 required for complete formation of the osmolytic pore. MAC assembly is also inhibited by clusterin (CLU) chaperones that inhibit polymerization of C9. Its function is as follows. Component of the membrane attack complex (MAC), a multiprotein complex activated by the complement cascade, which inserts into a target cell membrane and forms a pore, leading to target cell membrane rupture and cell lysis. The MAC is initiated by proteolytic cleavage of C5 into complement C5b in response to the classical, alternative, lectin and GZMK complement pathways. The complement pathways consist in a cascade of proteins that leads to phagocytosis and breakdown of pathogens and signaling that strengthens the adaptive immune system. C8B, together with C8A and C8G, inserts into the target membrane, but does not form pores by itself. During MAC assembly, associates with C5b, C6 and C7 to form the C5b8 intermediate complex that inserts into the target membrane and traverses the bilayer increasing membrane rigidity. In Homo sapiens (Human), this protein is Complement component C8 beta chain.